The chain runs to 78 residues: Dihydrofolate reductase type 2 (78 aa).

NADP(+)-binding positions include 32–36 (KKSGA) and 66–69 (VQIY). I68 is a binding site for substrate.

Homotetramer.

It catalyses the reaction (6S)-5,6,7,8-tetrahydrofolate + NADP(+) = 7,8-dihydrofolate + NADPH + H(+). Its pathway is cofactor biosynthesis; tetrahydrofolate biosynthesis; 5,6,7,8-tetrahydrofolate from 7,8-dihydrofolate: step 1/1. Functionally, key enzyme in folate metabolism. Catalyzes an essential reaction for de novo glycine and purine synthesis, and for DNA precursor synthesis. The sequence is that of Dihydrofolate reductase type 2 from Escherichia coli.